The chain runs to 293 residues: NAD kinase (293 aa).

Asp68 acts as the Proton acceptor in catalysis. Residues 68–69 (DG), 142–143 (ND), Arg153, Asp172, and 183–188 (TAYSLS) each bind NAD(+).

This sequence belongs to the NAD kinase family. It depends on a divalent metal cation as a cofactor.

The protein resides in the cytoplasm. It carries out the reaction NAD(+) + ATP = ADP + NADP(+) + H(+). In terms of biological role, involved in the regulation of the intracellular balance of NAD and NADP, and is a key enzyme in the biosynthesis of NADP. Catalyzes specifically the phosphorylation on 2'-hydroxyl of the adenosine moiety of NAD to yield NADP. This chain is NAD kinase, found in Lachnospira eligens (strain ATCC 27750 / DSM 3376 / VPI C15-48 / C15-B4) (Eubacterium eligens).